The chain runs to 184 residues: Protein GrpE (184 aa).

Positions Met1–Gly32 are disordered. Low complexity predominate over residues Thr12–Gly32.

Belongs to the GrpE family. In terms of assembly, homodimer.

Its subcellular location is the cytoplasm. Functionally, participates actively in the response to hyperosmotic and heat shock by preventing the aggregation of stress-denatured proteins, in association with DnaK and GrpE. It is the nucleotide exchange factor for DnaK and may function as a thermosensor. Unfolded proteins bind initially to DnaJ; upon interaction with the DnaJ-bound protein, DnaK hydrolyzes its bound ATP, resulting in the formation of a stable complex. GrpE releases ADP from DnaK; ATP binding to DnaK triggers the release of the substrate protein, thus completing the reaction cycle. Several rounds of ATP-dependent interactions between DnaJ, DnaK and GrpE are required for fully efficient folding. This is Protein GrpE from Cupriavidus pinatubonensis (strain JMP 134 / LMG 1197) (Cupriavidus necator (strain JMP 134)).